The sequence spans 592 residues: Probable oxidoreductase EphD (592 aa).

The AB hydrolase-1 domain maps to 30-286 (PTVVLVHGFP…KAGHFSPMSH (257 aa)). Ser-461 is a substrate binding site. Tyr-474 acts as the Proton acceptor in catalysis.

It belongs to the short-chain dehydrogenases/reductases (SDR) family.

The sequence is that of Probable oxidoreductase EphD (ephD) from Mycobacterium bovis (strain ATCC BAA-935 / AF2122/97).